Consider the following 286-residue polypeptide: Ribonuclease Z (286 aa).

Zn(2+) contacts are provided by H61, H63, D65, H66, H153, D176, and H240. D65 serves as the catalytic Proton acceptor.

The protein belongs to the RNase Z family. In terms of assembly, homodimer. It depends on Zn(2+) as a cofactor.

It catalyses the reaction Endonucleolytic cleavage of RNA, removing extra 3' nucleotides from tRNA precursor, generating 3' termini of tRNAs. A 3'-hydroxy group is left at the tRNA terminus and a 5'-phosphoryl group is left at the trailer molecule.. In terms of biological role, zinc phosphodiesterase, which displays some tRNA 3'-processing endonuclease activity. Probably involved in tRNA maturation, by removing a 3'-trailer from precursor tRNA. This Mycolicibacterium gilvum (strain PYR-GCK) (Mycobacterium gilvum (strain PYR-GCK)) protein is Ribonuclease Z.